The following is a 40-amino-acid chain: Large ribosomal subunit protein bL36B (40 aa).

This sequence belongs to the bacterial ribosomal protein bL36 family.

The chain is Large ribosomal subunit protein bL36B from Leifsonia xyli subsp. xyli (strain CTCB07).